The chain runs to 227 residues: Chalcone--flavanone isomerase (227 aa).

Residues threonine 50, asparagine 115, and serine 192 each contribute to the substrate site.

Belongs to the chalcone isomerase family. In terms of tissue distribution, fibers.

It catalyses the reaction a chalcone = a flavanone.. Its pathway is secondary metabolite biosynthesis; flavonoid biosynthesis. Its function is as follows. Catalyzes the intramolecular cyclization of bicyclic chalcones into tricyclic (S)-flavanones. Responsible for the isomerization of 4,2',4',6'-tetrahydroxychalcone (also termed chalcone) into naringenin. The chain is Chalcone--flavanone isomerase (CHI) from Gossypium hirsutum (Upland cotton).